A 276-amino-acid polypeptide reads, in one-letter code: Glutamate 5-kinase (276 aa).

K14 is an ATP binding site. Positions 54, 141, and 157 each coordinate substrate. ATP is bound by residues 177 to 178 and 219 to 225; these read SD and TGGMLTK.

It belongs to the glutamate 5-kinase family.

It is found in the cytoplasm. It catalyses the reaction L-glutamate + ATP = L-glutamyl 5-phosphate + ADP. Its pathway is amino-acid biosynthesis; L-proline biosynthesis; L-glutamate 5-semialdehyde from L-glutamate: step 1/2. Catalyzes the transfer of a phosphate group to glutamate to form L-glutamate 5-phosphate. The sequence is that of Glutamate 5-kinase from Listeria monocytogenes serotype 4a (strain HCC23).